The following is a 177-amino-acid chain: MKIAIFGGSFDPPHKGHIAIVKRALEELDIDYVIIVPTYLNPFKTSFQASPSLRLRWLRKIFLPYNRVKICDYEVRKGRPTYAIETVEFLRRKYAPKKLYYIIGSDNLPTLHKWHKYQKLSHLVQFVVATRKGYKVPKKYKMIEVHEDISSTELRIHPKKRYLPPIVAEEIIRFYRS.

This sequence belongs to the NadD family.

The enzyme catalyses nicotinate beta-D-ribonucleotide + ATP + H(+) = deamido-NAD(+) + diphosphate. The protein operates within cofactor biosynthesis; NAD(+) biosynthesis; deamido-NAD(+) from nicotinate D-ribonucleotide: step 1/1. Its function is as follows. Catalyzes the reversible adenylation of nicotinate mononucleotide (NaMN) to nicotinic acid adenine dinucleotide (NaAD). In Nitratiruptor sp. (strain SB155-2), this protein is Probable nicotinate-nucleotide adenylyltransferase.